A 409-amino-acid polypeptide reads, in one-letter code: Lissencephaly-1 homolog (409 aa).

The region spanning 7-39 (QREELNQAIADYLGTNGYADSLEAFRKEADLST) is the LisH domain. Residues 54–81 (TSVIRLQKKVMELEAKLTEAEKEVIEGA) adopt a coiled-coil conformation. WD repeat units lie at residues 104 to 145 (GHRA…RSLK), 146 to 185 (GHTD…ACVK), 189 to 228 (GHDH…CVKT), 231 to 270 (GHRE…CKVE), 273 to 332 (DHEH…CLLT), 335 to 374 (GHDN…CMKT), and 377 to 409 (AHQH…WECR).

The protein belongs to the WD repeat LIS1/nudF family.

Its subcellular location is the cytoplasm. The protein resides in the cytoskeleton. It is found in the microtubule organizing center. It localises to the centrosome. Its function is as follows. Positively regulates the activity of the minus-end directed microtubule motor protein dynein. May enhance dynein-mediated microtubule sliding by targeting dynein to the microtubule plus end. Required for several dynein- and microtubule-dependent processes. The polypeptide is Lissencephaly-1 homolog (Drosophila willistoni (Fruit fly)).